The chain runs to 253 residues: Probable ATP-dependent transporter ycf16 (253 aa).

The ABC transporter domain occupies 6-250; the sequence is LEVTNLHAAV…EKYGYDWLKN (245 aa). Position 38-45 (38-45) interacts with ATP; sequence GKNGSGKS.

Belongs to the ABC transporter superfamily. Ycf16 family.

The protein resides in the plastid. It localises to the chloroplast. The chain is Probable ATP-dependent transporter ycf16 (ycf16) from Guillardia theta (Cryptophyte).